A 565-amino-acid polypeptide reads, in one-letter code: MMKKHYKPILSQLENCRSLVELNQLHGLMIKSSVIRNVIPLSRLIDFCTTCPETMNLSYARSVFESIDCPSVYIWNSMIRGYSNSPNPDKALIFYQEMLRKGYSPDYFTFPYVLKACSGLRDIQFGSCVHGFVVKTGFEVNMYVSTCLLHMYMCCGEVNYGLRVFEDIPQWNVVAWGSLISGFVNNNRFSDAIEAFREMQSNGVKANETIMVDLLVACGRCKDIVTGKWFHGFLQGLGFDPYFQSKVGFNVILATSLIDMYAKCGDLRTARYLFDGMPERTLVSWNSIITGYSQNGDAEEALCMFLDMLDLGIAPDKVTFLSVIRASMIQGCSQLGQSIHAYVSKTGFVKDAAIVCALVNMYAKTGDAESAKKAFEDLEKKDTIAWTVVIIGLASHGHGNEALSIFQRMQEKGNATPDGITYLGVLYACSHIGLVEEGQRYFAEMRDLHGLEPTVEHYGCMVDILSRAGRFEEAERLVKTMPVKPNVNIWGALLNGCDIHENLELTDRIRSMVAEPEELGSGIYVLLSNIYAKAGRWADVKLIRESMKSKRVDKVLGHSSVETMF.

PPR repeat units follow at residues 37–70 (NVIPLSRLIDFCTTCPETMNLSYARSVFESIDCP), 71–105 (SVYIWNSMIRGYSNSPNPDKALIFYQEMLRKGYSP), 106–140 (DYFTFPYVLKACSGLRDIQFGSCVHGFVVKTGFEV), 141–171 (NMYVSTCLLHMYMCCGEVNYGLRVFEDIPQW), 172–206 (NVVAWGSLISGFVNNNRFSDAIEAFREMQSNGVKA), 207–241 (NETIMVDLLVACGRCKDIVTGKWFHGFLQGLGFDP), 250–280 (NVILATSLIDMYAKCGDLRTARYLFDGMPER), 281–315 (TLVSWNSIITGYSQNGDAEEALCMFLDMLDLGIAP), 316–350 (DKVTFLSVIRASMIQGCSQLGQSIHAYVSKTGFVK), 351–381 (DAAIVCALVNMYAKTGDAESAKKAFEDLEKK), 382–416 (DTIAWTVVIIGLASHGHGNEALSIFQRMQEKGNAT), 418–448 (DGITYLGVLYACSHIGLVEEGQRYFAEMRDL), and 454–484 (TVEHYGCMVDILSRAGRFEEAERLVKTMPVK). The tract at residues 489-564 (IWGALLNGCD…VLGHSSVETM (76 aa)) is type E motif.

It belongs to the PPR family. PCMP-E subfamily.

This is Putative pentatricopeptide repeat-containing protein At3g05240 (PCMP-E82) from Arabidopsis thaliana (Mouse-ear cress).